The primary structure comprises 888 residues: Alanine--tRNA ligase (888 aa).

4 residues coordinate Zn(2+): His-570, His-574, Cys-673, and His-677.

The protein belongs to the class-II aminoacyl-tRNA synthetase family. Requires Zn(2+) as cofactor.

The protein resides in the cytoplasm. It catalyses the reaction tRNA(Ala) + L-alanine + ATP = L-alanyl-tRNA(Ala) + AMP + diphosphate. Catalyzes the attachment of alanine to tRNA(Ala) in a two-step reaction: alanine is first activated by ATP to form Ala-AMP and then transferred to the acceptor end of tRNA(Ala). Also edits incorrectly charged Ser-tRNA(Ala) and Gly-tRNA(Ala) via its editing domain. This Chlorobium phaeobacteroides (strain DSM 266 / SMG 266 / 2430) protein is Alanine--tRNA ligase.